Reading from the N-terminus, the 114-residue chain is Replication initiation control protein YabA (114 aa).

Zn(2+) is bound by residues histidine 79, cysteine 81, cysteine 95, and cysteine 98.

Belongs to the YabA family. As to quaternary structure, homotetramer. Interacts with both DnaA and DnaN, acting as a bridge between these two proteins. Zn(2+) is required as a cofactor.

It localises to the cytoplasm. It is found in the nucleoid. Involved in control of chromosome replication initiation. Inhibits the cooperative binding of DnaA to the oriC region, thus negatively regulating initiation of chromosome replication. Inhibits the ability of DnaA-ATP to form a helix on DNA; does not disassemble preformed DnaA-DNA helices. Decreases the residence time of DnaA on the chromosome at its binding sites (oriC, replication forks and promoter-binding sites). Tethers DnaA to the replication machinery via the DNA polymerase beta sliding clamp subunit (dnaN). Associates with oriC and other DnaA targets on the chromosome in a DnaA-dependent manner. This chain is Replication initiation control protein YabA, found in Lactobacillus gasseri (strain ATCC 33323 / DSM 20243 / BCRC 14619 / CIP 102991 / JCM 1131 / KCTC 3163 / NCIMB 11718 / NCTC 13722 / AM63).